We begin with the raw amino-acid sequence, 566 residues long: SRSF protein kinase 3 (566 aa).

A compositionally biased stretch (gly residues) spans 1-13 (MSASTGGGGGGDS). Residues 1–60 (MSASTGGGGGGDSGSSSSSSSQASCGPEPSGSELAPPTPAPRMLQGLLGSDDEEQEDPKD) are disordered. A compositionally biased stretch (low complexity) spans 14–26 (GSSSSSSSQASCG). S50 carries the phosphoserine modification. The Protein kinase domain maps to 79-564 (YHVVRKLGWG…AADCLQHPWL (486 aa)). Residues 85 to 93 (LGWGHFSTV) and K108 contribute to the ATP site. Residue D212 is the Proton acceptor of the active site. Polar residues predominate over residues 236-254 (EWQQSGAPPPSRSTVSTAP). 2 disordered regions span residues 236 to 283 (EWQQ…LLEE) and 295 to 353 (EAAA…SGFS). Residues 263–278 (SKNKRKKMRRKRKQQK) are compositionally biased toward basic residues. Phosphoserine is present on S329. Positions 330–339 (PASSSPAPGG) are enriched in low complexity. Residues 344–353 (SPGSQTSGFS) show a composition bias toward polar residues.

Belongs to the protein kinase superfamily. As to expression, highly expressed in skeletal muscle, heart, uterus and parorchis. Weakly expressed in brain, stomach, small intestine and ovary.

It localises to the nucleus. It is found in the cytoplasm. It catalyses the reaction L-seryl-[protein] + ATP = O-phospho-L-seryl-[protein] + ADP + H(+). The enzyme catalyses L-threonyl-[protein] + ATP = O-phospho-L-threonyl-[protein] + ADP + H(+). In terms of biological role, serine/arginine-rich protein-specific kinase which specifically phosphorylates its substrates at serine residues located in regions rich in arginine/serine dipeptides, known as RS domains. Phosphorylates the SR splicing factor SRSF1 and the lamin-B receptor (LBR) in vitro. Required for normal muscle development. The sequence is that of SRSF protein kinase 3 (SRPK3) from Sus scrofa (Pig).